Reading from the N-terminus, the 384-residue chain is Tryptophan--tRNA ligase (384 aa).

A 'HIGH' region motif is present at residues 81–89 (PSGPMHIGH). The 'KMSKS' region motif lies at 252–256 (KMSAS).

It belongs to the class-I aminoacyl-tRNA synthetase family.

It localises to the cytoplasm. It carries out the reaction tRNA(Trp) + L-tryptophan + ATP = L-tryptophyl-tRNA(Trp) + AMP + diphosphate + H(+). In Thermococcus sibiricus (strain DSM 12597 / MM 739), this protein is Tryptophan--tRNA ligase.